We begin with the raw amino-acid sequence, 290 residues long: ATP synthase gamma chain (290 aa).

It belongs to the ATPase gamma chain family. As to quaternary structure, F-type ATPases have 2 components, CF(1) - the catalytic core - and CF(0) - the membrane proton channel. CF(1) has five subunits: alpha(3), beta(3), gamma(1), delta(1), epsilon(1). CF(0) has three main subunits: a, b and c.

The protein localises to the cell inner membrane. Functionally, produces ATP from ADP in the presence of a proton gradient across the membrane. The gamma chain is believed to be important in regulating ATPase activity and the flow of protons through the CF(0) complex. This is ATP synthase gamma chain from Paracoccus denitrificans (strain Pd 1222).